The following is a 261-amino-acid chain: Putative methyltransferase MJ0046 (261 aa).

It belongs to the methyltransferase superfamily.

The protein is Putative methyltransferase MJ0046 of Methanocaldococcus jannaschii (strain ATCC 43067 / DSM 2661 / JAL-1 / JCM 10045 / NBRC 100440) (Methanococcus jannaschii).